Consider the following 526-residue polypeptide: Methane monooxygenase component A alpha chain (526 aa).

Fe cation-binding residues include E114, E144, and H147. The active site involves C151. The Fe cation site is built by E209, E243, and H246.

It belongs to the TmoA/XamoA family. As to quaternary structure, m.trichosporium has two forms of methane monooxygenase, a soluble and a membrane-bound type. The soluble type consists of four components (A to D): protein A, comprising three chains, in an alpha-2, beta-2, gamma-2 configuration, is a nonheme iron protein containing an unusual mu-hydroxo bridge structure at its active site and interacts with both oxygen and methane. It depends on Fe cation as a cofactor.

The enzyme catalyses methane + NADH + O2 + H(+) = methanol + NAD(+) + H2O. The catalysed reaction is methane + NADPH + O2 + H(+) = methanol + NADP(+) + H2O. Functionally, responsible for the initial oxygenation of methane to methanol in methanotrophs. It also catalyzes the monohydroxylation of a variety of unactivated alkenes, alicyclic, aromatic and heterocyclic compounds. This chain is Methane monooxygenase component A alpha chain (mmoX), found in Methylosinus trichosporium.